Here is a 272-residue protein sequence, read N- to C-terminus: Small ribosomal subunit protein uS3 (272 aa).

The KH type-2 domain maps to 43–111 (IRELMTTGME…QIQLNILEVK (69 aa)). Residues 218-272 (AKEAAQPSGRGRGGERRGGGERRRRNDRAERAPRQENAGAGAETPAAAPAEGGNA) are disordered. Positions 229 to 238 (RGGERRGGGE) are enriched in basic and acidic residues. Positions 253–272 (ENAGAGAETPAAAPAEGGNA) are enriched in low complexity.

This sequence belongs to the universal ribosomal protein uS3 family. As to quaternary structure, part of the 30S ribosomal subunit. Forms a tight complex with proteins S10 and S14.

Functionally, binds the lower part of the 30S subunit head. Binds mRNA in the 70S ribosome, positioning it for translation. The chain is Small ribosomal subunit protein uS3 from Micrococcus luteus (strain ATCC 4698 / DSM 20030 / JCM 1464 / CCM 169 / CCUG 5858 / IAM 1056 / NBRC 3333 / NCIMB 9278 / NCTC 2665 / VKM Ac-2230) (Micrococcus lysodeikticus).